We begin with the raw amino-acid sequence, 387 residues long: NifS-like protein (387 aa).

Pyridoxal 5'-phosphate-binding positions include 58-59 and 184-186; these read SE and SIN.

The protein belongs to the class-V pyridoxal-phosphate-dependent aminotransferase family. NifS/IscS subfamily. Pyridoxal 5'-phosphate is required as a cofactor.

It localises to the virion. The protein is NifS-like protein of African swine fever virus (isolate Tick/South Africa/Pretoriuskop Pr4/1996) (ASFV).